A 90-amino-acid chain; its full sequence is Auxin-responsive protein SAUR23 (90 aa).

The protein belongs to the ARG7 family.

The protein resides in the cell membrane. Functionally, functions as a positive effector of cell expansion through modulation of auxin transport. This is Auxin-responsive protein SAUR23 from Arabidopsis thaliana (Mouse-ear cress).